Reading from the N-terminus, the 371-residue chain is MDPRKVSELRAFVKMCRQDPSVLHTEEMRFLREWVESMGGKVPPATHKAKSEENTKEEKRDKTTEENIKTEELSSEESDLEIDNEGVIEPDTDAPQEMGDENAEITEEMMDEANEKKGAAIEALNDGELQKAIDLFTDAIKLNPRLAILYAKRASVFVKLQKPNAAIRDCDRAIEINPDSAQPYKWRGKAHRLLGHWEEAAHDLALACKLDYDEDASAMLREVQPRAQKIAEHRRKYERKREEREIKERIERVKKAREEHERAQREEEARRQSGSQYGSFPGGFPGGMPGNFPGGMPGMGGAMPGMAGMAGMPGLNEILSDPEVLAAMQDPEVMVAFQDVAQNPSNMSKYQSNPKVMNLISKLSAKFGGQS.

Residues 38-80 form a disordered region; sequence MGGKVPPATHKAKSEENTKEEKRDKTTEENIKTEELSSEESDL. Basic and acidic residues predominate over residues 49–72; sequence AKSEENTKEEKRDKTTEENIKTEE. TPR repeat units follow at residues 113–146, 147–180, and 181–214; these read ANEK…NPRL, AILY…NPDS, and AQPY…DYDE. Basic and acidic residues predominate over residues 255–271; it reads KAREEHERAQREEEARR. Residues 255–296 are disordered; it reads KAREEHERAQREEEARRQSGSQYGSFPGGFPGGMPGNFPGGM. The span at 280-296 shows a compositional bias: gly residues; sequence FPGGFPGGMPGNFPGGM. Residues 321–360 form the STI1 domain; the sequence is DPEVLAAMQDPEVMVAFQDVAQNPSNMSKYQSNPKVMNLI. At Ser348 the chain carries Phosphoserine; by GRK5. Residues Lys355 and Lys362 each carry the N6-acetyllysine modification.

It belongs to the FAM10 family. As to quaternary structure, homotetramer. Interacts with HSC70 as well as DNAJ homologs and HSP90. Interacts (via the C-terminus 302- 318 AA) with GRK5.

It is found in the cytoplasm. In terms of biological role, one HIP oligomer binds the ATPase domains of at least two HSC70 molecules dependent on activation of the HSC70 ATPase by HSP40. Stabilizes the ADP state of HSC70 that has a high affinity for substrate protein. Through its own chaperone activity, it may contribute to the interaction of HSC70 with various target proteins. This chain is Hsc70-interacting protein (St13), found in Mus musculus (Mouse).